The following is a 338-amino-acid chain: Nicotinate-nucleotide--dimethylbenzimidazole phosphoribosyltransferase (338 aa).

E305 (proton acceptor) is an active-site residue.

The protein belongs to the CobT family. As to quaternary structure, homodimer.

It carries out the reaction 5,6-dimethylbenzimidazole + nicotinate beta-D-ribonucleotide = alpha-ribazole 5'-phosphate + nicotinate + H(+). The protein operates within nucleoside biosynthesis; alpha-ribazole biosynthesis; alpha-ribazole from 5,6-dimethylbenzimidazole: step 1/2. Functionally, catalyzes the synthesis of alpha-ribazole-5'-phosphate from nicotinate mononucleotide (NAMN) and 5,6-dimethylbenzimidazole (DMB). This chain is Nicotinate-nucleotide--dimethylbenzimidazole phosphoribosyltransferase (cobU), found in Sinorhizobium sp.